We begin with the raw amino-acid sequence, 301 residues long: Probable alpha-L-glutamate ligase (301 aa).

Residues 104 to 287 (TQLLARKGIG…IAGTIYAFLE (184 aa)) enclose the ATP-grasp domain. Residues Lys141, 178–179 (EY), Asp187, and 211–213 (RSN) each bind ATP. Positions 248, 260, and 262 each coordinate Mg(2+). Asp248, Glu260, and Asn262 together coordinate Mn(2+).

This sequence belongs to the RimK family. Requires Mg(2+) as cofactor. The cofactor is Mn(2+).

The sequence is that of Probable alpha-L-glutamate ligase from Alkalilimnicola ehrlichii (strain ATCC BAA-1101 / DSM 17681 / MLHE-1).